We begin with the raw amino-acid sequence, 384 residues long: Magnesium transporter MRS2-I (384 aa).

The next 2 helical transmembrane spans lie at 319–339 (LFLS…GIFG) and 356–376 (WVVL…VAYA). The Required for magnesium transport activity signature appears at 339-341 (GMN).

It belongs to the CorA metal ion transporter (MIT) (TC 1.A.35.5) family.

Its subcellular location is the membrane. Functionally, magnesium transporter that may mediate the influx of magnesium. This Oryza sativa subsp. japonica (Rice) protein is Magnesium transporter MRS2-I (MRS2-I).